We begin with the raw amino-acid sequence, 218 residues long: Ribonuclease HII (218 aa).

One can recognise an RNase H type-2 domain in the interval 12 to 206 (GRVAGVDEVG…VREALARSAL (195 aa)). Asp18, Glu19, and Asp115 together coordinate a divalent metal cation.

Belongs to the RNase HII family. Mn(2+) is required as a cofactor. Requires Mg(2+) as cofactor.

It is found in the cytoplasm. It catalyses the reaction Endonucleolytic cleavage to 5'-phosphomonoester.. Endonuclease that specifically degrades the RNA of RNA-DNA hybrids. The polypeptide is Ribonuclease HII (Rhodospirillum rubrum (strain ATCC 11170 / ATH 1.1.1 / DSM 467 / LMG 4362 / NCIMB 8255 / S1)).